Reading from the N-terminus, the 185-residue chain is MKSGEKDYSVKEAMIFSQRIAQLSKALWKCVEKDWQMWIKPYDLNINEHHILTIAYHLKGASISEIAKFGVMHVSTAFNFSKKLEERGYLVFSKKEDDKRNTYIEITDKGEELLLRLMEEYDPENNSVFNGALALRNFYGKFPENIELIAILRNIYGQDFIDIFEKSLEDIEENFTESDQKLVKK.

The HTH marR-type domain maps to 13–157 (AMIFSQRIAQ…LIAILRNIYG (145 aa)). Positions 63–86 (ISEIAKFGVMHVSTAFNFSKKLEE) form a DNA-binding region, H-T-H motif.

In terms of assembly, homodimer.

In terms of biological role, negative regulator of protease production and sporulation. This chain is HTH-type transcriptional regulator Hpr, found in Bacillus anthracis (strain CDC 684 / NRRL 3495).